The primary structure comprises 1183 residues: MSVQWTDEQQRAIDARGGHILVSAAAGSGKTAVLVERLTQRVINQEDPLTADRILVATFTNAAAKEMKTRVIEAIEAKIKVAPDDLYLKKQRQMMNRAQITTIHSFCLSILRENYYRIGLDPAFRIAEEAELLLLQDDVLEEVFESFYASADPAFYELIDSYTSDRDDQAMLTLISNLYRFSRSLPDPEAFYDHLIAQYDQPIDPDESSLLTRLFELEWERVGPVINRYMELSYRLRQSGYDEMADLLVQDVTPVRRINPEQDRWTTVALAFQAVEFGRWKGIRGDEEMKKFQTERTRLVSDLKKMRDLFVEKDGVDYLEDLRSQLGHVEMIVTLVRSFSAAYLEAKQQRGIVDFSDLEHFALAILEENGEPTDVARLLQERFIEVLVDEYQDTNEVQERILRLVSKSDEATGNLFMVGDVKQSIYKFRHAEPGLFLNKFKRFQQTEVGTRIDLTKNFRSRLEVLDGTNHIFRQVMDEAVGEIDYDEAAYLRLGNLGYVDSTQVDPELLLVDQTDTNKEELEAQVIATRIIEMVNDENPYLVFDAKQKRFRKCEYRDIVILVRSRGKRVQALVDVFEQYELPVYADTTGGYFQATEIQIMMSLLKTIDNPLQDIPFASVLRSPIFGLTDRDLGRIRAKSKDGSFYEAAILVAKEQTPLGLRVDEALNQLHHWRTEARGKSLASLIRSLFDQTGYFEYVGCLNGGRSRQANLNALYERAHQYEASGYRGLYRFLRLIHRLVERGEDFSEARSLGEDEDVVRIMTIHQSKGLEFPVTIVSQLGKQFNKQDQIQAIQLHKTYGIALDAIDPVKRLRSGTLLKEVIRREMDREMKAEEMRVLYVAMTRAKEKLILVGAIKGLEDQLIKWQDQPLDELLLPEMDRRNAKTYADWVVPAVLRNFLLSEDGPRWSFRIIALDEIAPYQELTKMVEQLEHVRVLEKIDHAGDETLNIQIEAAFAYQYPYQVATDTAAKQTVTELKRTEQLERAAFESTHRQSTYYRTPQFLGPTLTGAERGTVLHLAMQLYESGRSFEEQILDWEQAERISSLEAQTMREAIPELTTFLASDTGQLFEQRLLAGEVYRELPFTYKIDSARFRSDWHGPSDQAVMQGIVDCLIRDGDTYILLDYKSDQVFETTDNQNQAEVLRTRYATQLNLYQEALEAILHIRISRKLIYAFALHEVIEIY.

Residues 3 to 461 form the UvrD-like helicase ATP-binding domain; sequence VQWTDEQQRA…IDLTKNFRSR (459 aa). 24–31 serves as a coordination point for ATP; the sequence is AAAGSGKT. The UvrD-like helicase C-terminal domain maps to 473–769; the sequence is RQVMDEAVGE…RIMTIHQSKG (297 aa).

It belongs to the helicase family. AddA subfamily. In terms of assembly, heterodimer of AddA and AddB/RexB. Mg(2+) is required as a cofactor.

It catalyses the reaction Couples ATP hydrolysis with the unwinding of duplex DNA by translocating in the 3'-5' direction.. The catalysed reaction is ATP + H2O = ADP + phosphate + H(+). Functionally, the heterodimer acts as both an ATP-dependent DNA helicase and an ATP-dependent, dual-direction single-stranded exonuclease. Recognizes the chi site generating a DNA molecule suitable for the initiation of homologous recombination. The AddA nuclease domain is required for chi fragment generation; this subunit has the helicase and 3' -&gt; 5' nuclease activities. The protein is ATP-dependent helicase/nuclease subunit A of Exiguobacterium sibiricum (strain DSM 17290 / CCUG 55495 / CIP 109462 / JCM 13490 / 255-15).